The sequence spans 477 residues: Glycogen synthase (477 aa).

An ADP-alpha-D-glucose-binding site is contributed by lysine 15.

Belongs to the glycosyltransferase 1 family. Bacterial/plant glycogen synthase subfamily.

It catalyses the reaction [(1-&gt;4)-alpha-D-glucosyl](n) + ADP-alpha-D-glucose = [(1-&gt;4)-alpha-D-glucosyl](n+1) + ADP + H(+). Its pathway is glycan biosynthesis; glycogen biosynthesis. Synthesizes alpha-1,4-glucan chains using ADP-glucose. The chain is Glycogen synthase from Halorhodospira halophila (strain DSM 244 / SL1) (Ectothiorhodospira halophila (strain DSM 244 / SL1)).